A 1786-amino-acid chain; its full sequence is Protein TIC 214 (1786 aa).

6 helical membrane passes run 19–39 (IINSVVVVGLYYGFLTTFSIG), 68–88 (FIAGQLMMFISIYYAPLHLAL), 91–111 (PHTITVLALPYLLFHFFWNNH), 133–153 (VFLNNLIFQLFNHFILPSSML), 176–196 (VGWLIGHILFMKWVGLVLVWI), and 227–247 (IFSILLFITCVYYLGRIPSPI). Residues 1007 to 1046 (SLSEKKIKNLIDRKKTIRNQIEEISKEKQNLTNSCTKLRY) adopt a coiled-coil conformation.

This sequence belongs to the TIC214 family. As to quaternary structure, part of the Tic complex. Component of the 1-MD complex, composed of TIC20-I, TIC214, TIC100 and TIC56. Interacts with the translocating preproteins. Hydrolysis of ATP is essential for the formation of this complex. The 1-MD complex interacts with TIC21.

The protein resides in the plastid. The protein localises to the chloroplast inner membrane. In terms of biological role, involved in protein precursor import into chloroplasts. May be part of an intermediate translocation complex acting as a protein-conducting channel at the inner envelope. This is Protein TIC 214 from Arabidopsis thaliana (Mouse-ear cress).